We begin with the raw amino-acid sequence, 276 residues long: S-adenosylmethionine decarboxylase proenzyme (276 aa).

Ser126 serves as the catalytic Schiff-base intermediate with substrate; via pyruvic acid. Position 126 is a pyruvic acid (Ser); by autocatalysis (Ser126). His131 functions as the Proton acceptor; for processing activity in the catalytic mechanism. Cys154 functions as the Proton donor; for catalytic activity in the catalytic mechanism.

Belongs to the prokaryotic AdoMetDC family. Type 2 subfamily. In terms of assembly, heterooctamer of four alpha and four beta chains arranged as a tetramer of alpha/beta heterodimers. The cofactor is pyruvate. In terms of processing, is synthesized initially as an inactive proenzyme. Formation of the active enzyme involves a self-maturation process in which the active site pyruvoyl group is generated from an internal serine residue via an autocatalytic post-translational modification. Two non-identical subunits are generated from the proenzyme in this reaction, and the pyruvate is formed at the N-terminus of the alpha chain, which is derived from the carboxyl end of the proenzyme. The post-translation cleavage follows an unusual pathway, termed non-hydrolytic serinolysis, in which the side chain hydroxyl group of the serine supplies its oxygen atom to form the C-terminus of the beta chain, while the remainder of the serine residue undergoes an oxidative deamination to produce ammonia and the pyruvoyl group blocking the N-terminus of the alpha chain.

It catalyses the reaction S-adenosyl-L-methionine + H(+) = S-adenosyl 3-(methylsulfanyl)propylamine + CO2. It participates in amine and polyamine biosynthesis; S-adenosylmethioninamine biosynthesis; S-adenosylmethioninamine from S-adenosyl-L-methionine: step 1/1. Its function is as follows. Catalyzes the decarboxylation of S-adenosylmethionine to S-adenosylmethioninamine (dcAdoMet), the propylamine donor required for the synthesis of the polyamines spermine and spermidine from the diamine putrescine. The chain is S-adenosylmethionine decarboxylase proenzyme from Alcanivorax borkumensis (strain ATCC 700651 / DSM 11573 / NCIMB 13689 / SK2).